The primary structure comprises 221 residues: Uracil-DNA glycosylase 1 (221 aa).

D61 serves as the catalytic Proton acceptor.

This sequence belongs to the uracil-DNA glycosylase (UDG) superfamily. UNG family.

It localises to the cytoplasm. It catalyses the reaction Hydrolyzes single-stranded DNA or mismatched double-stranded DNA and polynucleotides, releasing free uracil.. Functionally, excises uracil residues from the DNA which can arise as a result of misincorporation of dUMP residues by DNA polymerase or due to deamination of cytosine. This is Uracil-DNA glycosylase 1 from Listeria innocua serovar 6a (strain ATCC BAA-680 / CLIP 11262).